The following is a 417-amino-acid chain: Gamma-glutamyl phosphate reductase (417 aa).

Belongs to the gamma-glutamyl phosphate reductase family.

The protein localises to the cytoplasm. The catalysed reaction is L-glutamate 5-semialdehyde + phosphate + NADP(+) = L-glutamyl 5-phosphate + NADPH + H(+). It functions in the pathway amino-acid biosynthesis; L-proline biosynthesis; L-glutamate 5-semialdehyde from L-glutamate: step 2/2. Catalyzes the NADPH-dependent reduction of L-glutamate 5-phosphate into L-glutamate 5-semialdehyde and phosphate. The product spontaneously undergoes cyclization to form 1-pyrroline-5-carboxylate. In Serratia marcescens, this protein is Gamma-glutamyl phosphate reductase.